The chain runs to 369 residues: Peptide chain release factor 2 (369 aa).

Glutamine 252 is modified (N5-methylglutamine).

It belongs to the prokaryotic/mitochondrial release factor family. In terms of processing, methylated by PrmC. Methylation increases the termination efficiency of RF2.

Its subcellular location is the cytoplasm. Peptide chain release factor 2 directs the termination of translation in response to the peptide chain termination codons UGA and UAA. The polypeptide is Peptide chain release factor 2 (Staphylococcus aureus (strain MRSA252)).